The following is a 151-amino-acid chain: Myosin light polypeptide 6 (151 aa).

The residue at position 2 (C2) is an N-acetylcysteine. The EF-hand 1 domain occupies 7-42 (DQTAEFKEAFQLFDRTGDGKILYSQCGDVMRALGQN). S57 is modified (phosphoserine). K81 carries the N6-acetyllysine modification. In terms of domain architecture, EF-hand 2 spans 84–119 (GTYEDYVEGLRVFDKEGNGTVMGAEIRHVLVTLGEK).

Myosin is a hexamer of 2 heavy chains and 4 light chains. Interacts with SPATA6.

Its function is as follows. Regulatory light chain of myosin. Does not bind calcium. The protein is Myosin light polypeptide 6 (MYL6) of Bos taurus (Bovine).